The chain runs to 180 residues: Large ribosomal subunit protein uL5 (180 aa).

This sequence belongs to the universal ribosomal protein uL5 family. Part of the 50S ribosomal subunit; part of the 5S rRNA/L5/L18/L25 subcomplex. Contacts the 5S rRNA and the P site tRNA. Forms a bridge to the 30S subunit in the 70S ribosome.

Functionally, this is one of the proteins that bind and probably mediate the attachment of the 5S RNA into the large ribosomal subunit, where it forms part of the central protuberance. In the 70S ribosome it contacts protein S13 of the 30S subunit (bridge B1b), connecting the 2 subunits; this bridge is implicated in subunit movement. Contacts the P site tRNA; the 5S rRNA and some of its associated proteins might help stabilize positioning of ribosome-bound tRNAs. In Lactiplantibacillus plantarum (strain ATCC BAA-793 / NCIMB 8826 / WCFS1) (Lactobacillus plantarum), this protein is Large ribosomal subunit protein uL5.